The following is a 126-amino-acid chain: Alpha-lactalbumin (126 aa).

One can recognise a C-type lysozyme domain in the interval lysine 1–cysteine 126. 4 disulfide bridges follow: cysteine 6–cysteine 126, cysteine 30–cysteine 117, cysteine 63–cysteine 82, and cysteine 78–cysteine 96. N-linked (GlcNAc...) asparagine glycosylation is present at asparagine 47. 5 residues coordinate Ca(2+): lysine 84, aspartate 87, aspartate 89, aspartate 92, and aspartate 93.

It belongs to the glycosyl hydrolase 22 family. Lactose synthase (LS) is a heterodimer of a catalytic component, beta1,4-galactosyltransferase (beta4Gal-T1) and a regulatory component, alpha-lactalbumin (LA). In terms of tissue distribution, mammary gland specific. Secreted in milk.

The protein resides in the secreted. Its function is as follows. Regulatory subunit of lactose synthase, changes the substrate specificity of galactosyltransferase in the mammary gland making glucose a good acceptor substrate for this enzyme. This enables LS to synthesize lactose, the major carbohydrate component of milk. In other tissues, galactosyltransferase transfers galactose onto the N-acetylglucosamine of the oligosaccharide chains in glycoproteins. This chain is Alpha-lactalbumin (LALBA), found in Tachyglossus aculeatus aculeatus (Southeast Australian short-beaked echidna).